A 156-amino-acid chain; its full sequence is Cyanate hydratase (156 aa).

Active-site residues include R96, E99, and S122.

It belongs to the cyanase family.

It catalyses the reaction cyanate + hydrogencarbonate + 3 H(+) = NH4(+) + 2 CO2. In terms of biological role, catalyzes the reaction of cyanate with bicarbonate to produce ammonia and carbon dioxide. This chain is Cyanate hydratase, found in Burkholderia orbicola (strain MC0-3).